We begin with the raw amino-acid sequence, 151 residues long: Putative pre-16S rRNA nuclease (151 aa).

This sequence belongs to the YqgF nuclease family.

It localises to the cytoplasm. Functionally, could be a nuclease involved in processing of the 5'-end of pre-16S rRNA. This chain is Putative pre-16S rRNA nuclease, found in Onion yellows phytoplasma (strain OY-M).